The primary structure comprises 131 residues: NADPH-dependent 7-cyano-7-deazaguanine reductase (131 aa).

Residue cysteine 47 is the Thioimide intermediate of the active site. The Proton donor role is filled by aspartate 54. Residues 69-71 (MEL) and 88-89 (HE) each bind substrate.

This sequence belongs to the GTP cyclohydrolase I family. QueF type 1 subfamily.

It localises to the cytoplasm. The enzyme catalyses 7-aminomethyl-7-carbaguanine + 2 NADP(+) = 7-cyano-7-deazaguanine + 2 NADPH + 3 H(+). It functions in the pathway tRNA modification; tRNA-queuosine biosynthesis. Catalyzes the NADPH-dependent reduction of 7-cyano-7-deazaguanine (preQ0) to 7-aminomethyl-7-deazaguanine (preQ1). This Microcystis aeruginosa (strain NIES-843 / IAM M-2473) protein is NADPH-dependent 7-cyano-7-deazaguanine reductase.